Here is a 350-residue protein sequence, read N- to C-terminus: MCRCPLEHHEVRMTSAEAIAVAGSAQEHGRPKWPPDKPQVLGQPALARVVVAALVWLLAGASMSSLNKWIFTVHGFGRPLLLSALHMLAAAVACHWGAQRPVPHSIHRRVLLLSLTFGTSMACGNVGLSTVPLDLAQLATTTTPLFTLALSALLLGRRHHPLQFAAMGPLCLGAACSLAGELRAPPAGCGFLLVATCLRGFKSVQQSALLQEERLDAVTLLYATSLPSFCLLAGAALVLEAGAAPPLPPTDSRLWACVLLSCFLSVVYNLASFSLLALTSALTVHVLGNLTVVGNLILSRLLFGSHLSALSYVGIALTLSGMFLYHNCESVASWATRRGLWNRDQPGKGL.

Transmembrane regions (helical) follow at residues 40-60, 79-99, 110-130, 135-155, 218-238, 258-278, 279-299, and 301-321; these read VLGQPALARVVVAALVWLLAG, PLLLSALHMLAAAVACHWGAQ, VLLLSLTFGTSMACGNVGLST, LAQLATTTTPLFTLALSALLL, VTLLYATSLPSFCLLAGAALV, VLLSCFLSVVYNLASFSLLAL, TSALTVHVLGNLTVVGNLILS, and LLFGSHLSALSYVGIALTLSG. The EamA domain occupies 125 to 179; that stretch reads NVGLSTVPLDLAQLATTTTPLFTLALSALLLGRRHHPLQFAAMGPLCLGAACSLA.

The protein belongs to the TPT transporter family. SLC35E subfamily.

The protein localises to the membrane. In terms of biological role, putative transporter. This chain is Solute carrier family 35 member E4 (Slc35e4), found in Rattus norvegicus (Rat).